The chain runs to 645 residues: 1-deoxy-D-xylulose-5-phosphate synthase (645 aa).

Residues His-79 and 120 to 122 each bind thiamine diphosphate; that span reads AHS. Residue Asp-155 participates in Mg(2+) binding. Residues 156 to 157, Asn-184, Tyr-293, and Glu-375 each bind thiamine diphosphate; that span reads GA. Asn-184 contacts Mg(2+).

The protein belongs to the transketolase family. DXPS subfamily. In terms of assembly, homodimer. It depends on Mg(2+) as a cofactor. Requires thiamine diphosphate as cofactor.

The catalysed reaction is D-glyceraldehyde 3-phosphate + pyruvate + H(+) = 1-deoxy-D-xylulose 5-phosphate + CO2. Its pathway is metabolic intermediate biosynthesis; 1-deoxy-D-xylulose 5-phosphate biosynthesis; 1-deoxy-D-xylulose 5-phosphate from D-glyceraldehyde 3-phosphate and pyruvate: step 1/1. Functionally, catalyzes the acyloin condensation reaction between C atoms 2 and 3 of pyruvate and glyceraldehyde 3-phosphate to yield 1-deoxy-D-xylulose-5-phosphate (DXP). The sequence is that of 1-deoxy-D-xylulose-5-phosphate synthase from Ruegeria sp. (strain TM1040) (Silicibacter sp.).